Here is a 327-residue protein sequence, read N- to C-terminus: Thiamine-binding periplasmic protein (327 aa).

Residues Met1–Ala18 form the signal peptide. Thiamine is bound by residues Asp59–Gly60, Ser161–Thr162, Trp197, and Tyr215–Ser218.

Belongs to the bacterial solute-binding protein 1 family. In terms of assembly, the complex is composed of two ATP-binding proteins (ThiQ), two transmembrane proteins (ThiP) and a solute-binding protein (ThiB).

It is found in the periplasm. Functionally, part of the ABC transporter complex ThiBPQ involved in thiamine import. Is also involved in thiamine pyrophosphate transport. This Salmonella typhimurium (strain LT2 / SGSC1412 / ATCC 700720) protein is Thiamine-binding periplasmic protein.